A 576-amino-acid polypeptide reads, in one-letter code: Septation ring formation regulator EzrA (576 aa).

Residues 1–7 (MSSTVII) are Extracellular-facing. Residues 8–26 (LIVVLLVILVAFYAFAILM) traverse the membrane as a helical segment. The Cytoplasmic segment spans residues 27–576 (RKKTEDRILA…FKNKPTPDYL (550 aa)). Coiled-coil stretches lie at residues 105-134 (RARE…VAQL) and 277-301 (EQFE…LYAI).

Belongs to the EzrA family.

It is found in the cell membrane. In terms of biological role, negative regulator of FtsZ ring formation; modulates the frequency and position of FtsZ ring formation. Inhibits FtsZ ring formation at polar sites. Interacts either with FtsZ or with one of its binding partners to promote depolymerization. This chain is Septation ring formation regulator EzrA, found in Lactococcus lactis subsp. lactis (strain IL1403) (Streptococcus lactis).